We begin with the raw amino-acid sequence, 189 residues long: Hypoxanthine/guanine phosphoribosyltransferase (189 aa).

Belongs to the purine/pyrimidine phosphoribosyltransferase family. Archaeal HPRT subfamily. As to quaternary structure, homodimer.

It localises to the cytoplasm. It catalyses the reaction IMP + diphosphate = hypoxanthine + 5-phospho-alpha-D-ribose 1-diphosphate. It carries out the reaction GMP + diphosphate = guanine + 5-phospho-alpha-D-ribose 1-diphosphate. It functions in the pathway purine metabolism; IMP biosynthesis via salvage pathway; IMP from hypoxanthine: step 1/1. Functionally, catalyzes a salvage reaction resulting in the formation of IMP that is energically less costly than de novo synthesis. In Methanosarcina mazei (strain ATCC BAA-159 / DSM 3647 / Goe1 / Go1 / JCM 11833 / OCM 88) (Methanosarcina frisia), this protein is Hypoxanthine/guanine phosphoribosyltransferase.